We begin with the raw amino-acid sequence, 819 residues long: Regulator of G-protein signaling rgs-7 (819 aa).

Residues Met-1–Asp-11 show a composition bias toward acidic residues. Disordered regions lie at residues Met-1–Trp-51, Gly-112–Ser-135, and Ser-149–Glu-259. Positions Tyr-32–Ala-44 are enriched in polar residues. A compositionally biased stretch (basic and acidic residues) spans Gly-112 to Val-124. A compositionally biased stretch (low complexity) spans Ser-149–Ala-166. Residues Gln-173–Ser-185 are compositionally biased toward polar residues. Residues Arg-213–Arg-223 are compositionally biased toward basic residues. Over residues Ser-234–Glu-259 the composition is skewed to basic and acidic residues. Residues Lys-290 to Phe-429 form the C2 domain. Disordered regions lie at residues Tyr-515–Gly-594 and Phe-617–Lys-640. Composition is skewed to polar residues over residues Ser-517 to Asp-533, Pro-559 to Asn-568, and Phe-617 to Gln-632. Residues Ser-682–Leu-800 form the RGS domain.

Interacts with egl-30.

Inhibits signal transduction by increasing the GTPase activity of G protein alpha subunit egl-30 (G-alpha(q)), thereby driving it into its inactive GDP-bound form. May organize egl-30 into a stable multiprotein signaling complex, and thereby persistently inhibit egl-30 when triggered by calcium or phospholipids. The protein is Regulator of G-protein signaling rgs-7 (rgs-7) of Caenorhabditis elegans.